Consider the following 367-residue polypeptide: Eukaryotic translation initiation factor 3 subunit H (367 aa).

The MPN domain maps to 14–166; it reads VQVEALVVMK…LRAFRLSPTF (153 aa).

The protein belongs to the eIF-3 subunit H family. In terms of assembly, component of the eukaryotic translation initiation factor 3 (eIF-3) complex.

The protein resides in the cytoplasm. Functionally, component of the eukaryotic translation initiation factor 3 (eIF-3) complex, which is involved in protein synthesis of a specialized repertoire of mRNAs and, together with other initiation factors, stimulates binding of mRNA and methionyl-tRNAi to the 40S ribosome. The eIF-3 complex specifically targets and initiates translation of a subset of mRNAs involved in cell proliferation. In Botryotinia fuckeliana (strain B05.10) (Noble rot fungus), this protein is Eukaryotic translation initiation factor 3 subunit H.